The sequence spans 346 residues: STE20-related kinase adapter protein stlk (346 aa).

A Protein kinase domain is found at 10 to 298; sequence YKLLEILKNG…ASKLMTHSFL (289 aa). Residues 16-24 and lysine 38 each bind ATP; that span reads LKNGMIGTV.

This sequence belongs to the protein kinase superfamily. STE Ser/Thr protein kinase family. STE20 subfamily.

This is STE20-related kinase adapter protein stlk from Drosophila melanogaster (Fruit fly).